The following is a 201-amino-acid chain: 3-isopropylmalate dehydratase small subunit (201 aa).

The protein belongs to the LeuD family. LeuD type 1 subfamily. In terms of assembly, heterodimer of LeuC and LeuD.

It catalyses the reaction (2R,3S)-3-isopropylmalate = (2S)-2-isopropylmalate. It participates in amino-acid biosynthesis; L-leucine biosynthesis; L-leucine from 3-methyl-2-oxobutanoate: step 2/4. Catalyzes the isomerization between 2-isopropylmalate and 3-isopropylmalate, via the formation of 2-isopropylmaleate. This chain is 3-isopropylmalate dehydratase small subunit, found in Shewanella amazonensis (strain ATCC BAA-1098 / SB2B).